The chain runs to 418 residues: F420-non-reducing hydrogenase vhu subunit A (418 aa).

Residues Cys-61 and Cys-64 each contribute to the Ni(2+) site.

Belongs to the [NiFe]/[NiFeSe] hydrogenase large subunit family. The F420-non-reducing hydrogenase vhu is composed of four subunits; VhuA, VhuD, VhuG and VhuU. Requires Ni(2+) as cofactor.

The sequence is that of F420-non-reducing hydrogenase vhu subunit A (vhuA) from Methanocaldococcus jannaschii (strain ATCC 43067 / DSM 2661 / JAL-1 / JCM 10045 / NBRC 100440) (Methanococcus jannaschii).